A 203-amino-acid chain; its full sequence is ATP-dependent Clp protease proteolytic subunit 2 (203 aa).

Ser-100 (nucleophile) is an active-site residue. His-125 is an active-site residue.

Belongs to the peptidase S14 family. In terms of assembly, fourteen ClpP subunits assemble into 2 heptameric rings which stack back to back to give a disk-like structure with a central cavity, resembling the structure of eukaryotic proteasomes.

It is found in the cytoplasm. It catalyses the reaction Hydrolysis of proteins to small peptides in the presence of ATP and magnesium. alpha-casein is the usual test substrate. In the absence of ATP, only oligopeptides shorter than five residues are hydrolyzed (such as succinyl-Leu-Tyr-|-NHMec, and Leu-Tyr-Leu-|-Tyr-Trp, in which cleavage of the -Tyr-|-Leu- and -Tyr-|-Trp bonds also occurs).. Functionally, cleaves peptides in various proteins in a process that requires ATP hydrolysis. Has a chymotrypsin-like activity. Plays a major role in the degradation of misfolded proteins. This Nocardia farcinica (strain IFM 10152) protein is ATP-dependent Clp protease proteolytic subunit 2.